A 163-amino-acid polypeptide reads, in one-letter code: 3-hydroxyacyl-[acyl-carrier-protein] dehydratase FabZ (163 aa).

The active site involves H61.

It belongs to the thioester dehydratase family. FabZ subfamily.

It localises to the cytoplasm. It carries out the reaction a (3R)-hydroxyacyl-[ACP] = a (2E)-enoyl-[ACP] + H2O. In terms of biological role, involved in unsaturated fatty acids biosynthesis. Catalyzes the dehydration of short chain beta-hydroxyacyl-ACPs and long chain saturated and unsaturated beta-hydroxyacyl-ACPs. This is 3-hydroxyacyl-[acyl-carrier-protein] dehydratase FabZ from Dinoroseobacter shibae (strain DSM 16493 / NCIMB 14021 / DFL 12).